A 546-amino-acid polypeptide reads, in one-letter code: Chaperonin GroEL (546 aa).

Residues 30–33, Lys-51, 87–91, Gly-415, 479–481, and Asp-495 contribute to the ATP site; these read TLGP, DGTTT, and NAA.

Belongs to the chaperonin (HSP60) family. Forms a cylinder of 14 subunits composed of two heptameric rings stacked back-to-back. Interacts with the co-chaperonin GroES.

It is found in the cytoplasm. The catalysed reaction is ATP + H2O + a folded polypeptide = ADP + phosphate + an unfolded polypeptide.. Functionally, together with its co-chaperonin GroES, plays an essential role in assisting protein folding. The GroEL-GroES system forms a nano-cage that allows encapsulation of the non-native substrate proteins and provides a physical environment optimized to promote and accelerate protein folding. The sequence is that of Chaperonin GroEL from Paraburkholderia phytofirmans (strain DSM 17436 / LMG 22146 / PsJN) (Burkholderia phytofirmans).